The sequence spans 473 residues: Photosystem II CP43 reaction center protein (473 aa).

Positions 1 to 14 are excised as a propeptide; sequence MKILYSLRRFYHVE. Threonine 15 is modified (N-acetylthreonine). The residue at position 15 (threonine 15) is a Phosphothreonine. 5 helical membrane passes run 69–93, 134–155, 178–200, 255–275, and 291–312; these read LFEV…PHLA, LLGP…KDRN, KALY…RKIT, KPFA…LSYS, and WFNN…ASQA. Glutamate 367 serves as a coordination point for [CaMn4O5] cluster. A helical membrane pass occupies residues 447 to 471; the sequence is RARAAAAGFEKGIDRDLEPVLYMNP.

The protein belongs to the PsbB/PsbC family. PsbC subfamily. PSII is composed of 1 copy each of membrane proteins PsbA, PsbB, PsbC, PsbD, PsbE, PsbF, PsbH, PsbI, PsbJ, PsbK, PsbL, PsbM, PsbT, PsbX, PsbY, PsbZ, Psb30/Ycf12, at least 3 peripheral proteins of the oxygen-evolving complex and a large number of cofactors. It forms dimeric complexes. Requires Binds multiple chlorophylls and provides some of the ligands for the Ca-4Mn-5O cluster of the oxygen-evolving complex. It may also provide a ligand for a Cl- that is required for oxygen evolution. PSII binds additional chlorophylls, carotenoids and specific lipids. as cofactor. Phosphorylated on threonine residue(s); phosphorylation increases with increasing light levels.

Its subcellular location is the plastid. It localises to the chloroplast thylakoid membrane. Its function is as follows. One of the components of the core complex of photosystem II (PSII). It binds chlorophyll and helps catalyze the primary light-induced photochemical processes of PSII. PSII is a light-driven water:plastoquinone oxidoreductase, using light energy to abstract electrons from H(2)O, generating O(2) and a proton gradient subsequently used for ATP formation. This Secale cereale (Rye) protein is Photosystem II CP43 reaction center protein.